The chain runs to 124 residues: Small ribosomal subunit protein uS13 (124 aa).

Positions 103 to 117 (KCNARTRKGPRKTVA) are enriched in basic residues. The segment at 103-124 (KCNARTRKGPRKTVANKKIETK) is disordered.

Belongs to the universal ribosomal protein uS13 family. Part of the 30S ribosomal subunit. Forms a loose heterodimer with protein S19. Forms two bridges to the 50S subunit in the 70S ribosome.

Functionally, located at the top of the head of the 30S subunit, it contacts several helices of the 16S rRNA. In the 70S ribosome it contacts the 23S rRNA (bridge B1a) and protein L5 of the 50S subunit (bridge B1b), connecting the 2 subunits; these bridges are implicated in subunit movement. Contacts the tRNAs in the A and P-sites. The chain is Small ribosomal subunit protein uS13 from Malacoplasma penetrans (strain HF-2) (Mycoplasma penetrans).